Consider the following 242-residue polypeptide: MEEGWDFDSSPPSFKQVQPLLLTLFSLSGTGWLINYITTIRTAYRDRTPGVSLVALTNNLAWELVFAILHPPPLPVAKVILRSWLFVDIFVIYTTAKFARSSSISSNAPLLHRYLHLFVLFGILGFFSGHWALSVLLSPIKAFYWSGMMCLVVMSGTALGILVQRGHTRGMSYGMWFSRFVGSIFAVASLFLRSTYWPQVWGWSDNILMRWFAGAFVVLDGLYGVCFWYTRRVEQRQRDKVA.

7 helical membrane-spanning segments follow: residues 20 to 40 (LLLT…ITTI), 50 to 69 (GVSL…FAIL), 79 to 101 (VILR…FARS), 117 to 137 (LFVL…SVLL), 143 to 163 (FYWS…GILV), 172 to 192 (SYGM…SLFL), and 207 to 227 (ILMR…GVCF).

It belongs to the paxB family.

Its subcellular location is the membrane. It participates in secondary metabolite biosynthesis; terpenoid biosynthesis. Its function is as follows. Non-reducing polyketide synthase; part of the cluster A that mediates the biosynthesis of chevalone E and its oxidized derivatives that possess a unique five-membered lactone ring and can synergistically enhance the cytotoxicity of doxorubicin (DOX) in breast cancer cells. Within the pathway, cle7 takes part to the biosynthesis of the molecular scaffold by catalyzing the cyclization of the prenyl group initiated by protonation and ring-opening of the epoxide to produce the chevalone E intermediate. The molecular scaffold is commonly biosynthesized by a series of enzymes including the non-reducing polyketide synthase (NR-PKS) cle1 that produces the alpha-pyrone triacetic acid lactone (TAL); The membrane-bound prenyltransferase cle5 that accepts TAL as its substrate to perform a C-3 geranylgeranylation reaction, in which the pathway-dedicated GGPS cle6 is required to provide GGPP, the other substrate of cle5; the FAD-dependent monooxygenase Cle3 that forms an (S)-epoxide ring at the terminal olefin of the geranylgeranyl group; and the terpene cyclase Cle7 that catalyzes the cyclization of the prenyl group that yields the pentacyclic pathway intermediate chevalone E. Chevalone E can derivatize into seven new oxidized analogs by the cytochrome P450 monooxygenases cle2 (acting at C-20) and cle4 (acting at C-11 and C-12). The sequence is that of Terpene cyclase cle7 from Aspergillus versicolor.